The primary structure comprises 215 residues: CUE domain-containing protein 4, mitochondrial (215 aa).

The transit peptide at Met1–Gly29 directs the protein to the mitochondrion. Positions Val48 to Pro90 constitute a CUE domain. Residues Gly109 to Arg191 are disordered. Composition is skewed to low complexity over residues Ser122 to Ser140 and Ser153 to Ser165. The span at Ser180–Arg191 shows a compositional bias: basic and acidic residues.

The protein resides in the mitochondrion. The chain is CUE domain-containing protein 4, mitochondrial from Schizosaccharomyces pombe (strain 972 / ATCC 24843) (Fission yeast).